A 301-amino-acid polypeptide reads, in one-letter code: Probable enoyl-CoA hydratase 2, mitochondrial (301 aa).

A mitochondrion-targeting transit peptide spans 1 to 32 (MSFVKYLRRDNLLQLAGKPSLSRNYILQTCRT). Substrate is bound by residues 105 to 109 (AGADL) and Gly152.

It belongs to the enoyl-CoA hydratase/isomerase family.

It localises to the mitochondrion. It carries out the reaction a (3S)-3-hydroxyacyl-CoA = a (2E)-enoyl-CoA + H2O. The enzyme catalyses a 4-saturated-(3S)-3-hydroxyacyl-CoA = a (3E)-enoyl-CoA + H2O. The protein operates within lipid metabolism; fatty acid beta-oxidation. Functionally, straight-chain enoyl-CoA thioesters from C4 up to at least C16 are processed, although with decreasing catalytic rate. The chain is Probable enoyl-CoA hydratase 2, mitochondrial from Arabidopsis thaliana (Mouse-ear cress).